The sequence spans 221 residues: Adenylate kinase (221 aa).

10-15 provides a ligand contact to ATP; that stretch reads GAGKGT. The interval 30–59 is NMP; it reads STGDMLRAAVKAGTPLGIEAKKVMDAGGLV. AMP contacts are provided by residues Thr-31, Arg-36, 57 to 59, 85 to 88, and Gln-92; these read GLV and GFPR. An LID region spans residues 122–159; that stretch reads GRRVHVASGRTYHVKFNPPKADMVDDETGEALIQRDDD. Residues Arg-123 and 132 to 133 contribute to the ATP site; that span reads TY. Arg-156 and Arg-167 together coordinate AMP. Gly-207 lines the ATP pocket.

This sequence belongs to the adenylate kinase family. Monomer.

The protein localises to the cytoplasm. It carries out the reaction AMP + ATP = 2 ADP. It functions in the pathway purine metabolism; AMP biosynthesis via salvage pathway; AMP from ADP: step 1/1. Functionally, catalyzes the reversible transfer of the terminal phosphate group between ATP and AMP. Plays an important role in cellular energy homeostasis and in adenine nucleotide metabolism. The chain is Adenylate kinase from Cupriavidus metallidurans (strain ATCC 43123 / DSM 2839 / NBRC 102507 / CH34) (Ralstonia metallidurans).